A 175-amino-acid chain; its full sequence is uncharacterized protein (175 aa).

This is an uncharacterized protein from Archaeoglobus fulgidus (strain ATCC 49558 / DSM 4304 / JCM 9628 / NBRC 100126 / VC-16).